A 225-amino-acid polypeptide reads, in one-letter code: Prepilin leader peptidase/N-methyltransferase (225 aa).

At 1–2 (MT) the chain is on the periplasmic side. Residues 3 to 23 (MLLPLFILVGFIADYFVNAIA) form a helical membrane-spanning segment. Residues 24 to 67 (YHLSPLEDKTALTFRQVLVHFRQKKYAWHDTVPLILCVAAAIAC) are Cytoplasmic-facing. The helical transmembrane segment at 68–88 (ALAPFTPIVTGALFLYFCFVL) threads the bilayer. Topologically, residues 89-103 (TLSVIDFRTQLLPDK) are periplasmic. Residues 104 to 124 (LTLPLLWLGLVFNAQYGLIDL) form a helical membrane-spanning segment. Residues 125 to 127 (HDA) are Cytoplasmic-facing. Residues 128–148 (VYGAVAGYGVLWCVYWGVWLV) traverse the membrane as a helical segment. At 149-174 (CHKEGLGYGDFKLLAAAGAWCGWQTL) the chain is on the periplasmic side. Residues 175–195 (PMILLIASLGGIGYAIVSQLL) form a helical membrane-spanning segment. The Cytoplasmic portion of the chain corresponds to 196 to 202 (QRRTITT). Residues 203–223 (IAFGPWLALGSMINLGYLAWI) form a helical membrane-spanning segment. Residues 224 to 225 (SY) are Periplasmic-facing.

This sequence belongs to the peptidase A24 family.

It is found in the cell inner membrane. The catalysed reaction is Typically cleaves a -Gly-|-Phe- bond to release an N-terminal, basic peptide of 5-8 residues from type IV prepilin, and then N-methylates the new N-terminal amino group, the methyl donor being S-adenosyl-L-methionine.. In terms of biological role, plays a role in type II pseudopili formation by proteolytically removing the leader sequence from substrate proteins and subsequently monomethylating the alpha-amino group of the newly exposed N-terminal phenylalanine. Substrates include proteins required for biogenesis of the type II general secretory apparatus. This Escherichia coli (strain K12) protein is Prepilin leader peptidase/N-methyltransferase (gspO).